Here is a 201-residue protein sequence, read N- to C-terminus: Two-component response regulator ORR9 (201 aa).

In terms of domain architecture, Response regulatory spans 10–142 (HVLAVDDSLP…DMSKLKPHIL (133 aa)). A 4-aspartylphosphate modification is found at Asp75. Positions 149 to 201 (HYQQEQNLQSNSESNNSSNPTSENSSSSTSSNSHKRKAVDEEILPHTIRPRHS) are disordered. The segment covering 158-180 (SNSESNNSSNPTSENSSSSTSSN) has biased composition (low complexity).

The protein belongs to the ARR family. Type-A subfamily. In terms of processing, two-component system major event consists of a His-to-Asp phosphorelay between a sensor histidine kinase (HK) and a response regulator (RR). In plants, the His-to-Asp phosphorelay involves an additional intermediate named Histidine-containing phosphotransfer protein (HPt). This multistep phosphorelay consists of a His-Asp-His-Asp sequential transfer of a phosphate group between first a His and an Asp of the HK protein, followed by the transfer to a conserved His of the HPt protein and finally the transfer to an Asp in the receiver domain of the RR protein.

Functions as a response regulator involved in His-to-Asp phosphorelay signal transduction system. Phosphorylation of the Asp residue in the receiver domain activates the ability of the protein to promote the transcription of target genes. Type-A response regulators seem to act as negative regulators of the cytokinin signaling. This is Two-component response regulator ORR9 from Oryza sativa subsp. japonica (Rice).